The primary structure comprises 229 residues: MQGTADLSTSKLGTKKYWDELYALELENFRRNPQDTGDCWFSDSDAEQKMIDFLVDNIGAYRISENASVVDLGTGNGHMLFELHQTEFQGKLVGIDYSEESVKLASNIAEATGVDNFISFQQADIFSGDWKPGKYDIVLDKGTLDAISLSGMKINGKLDVVDVYAGVVERILKKDGIFLITSCNFTQDELVKIIETDNLKMWKTIKYPVFQFGGVQGATICSVAFVKQN.

This sequence belongs to the class I-like SAM-binding methyltransferase superfamily. EFM4 family.

It localises to the cytoplasm. The enzyme catalyses L-lysyl-[protein] + S-adenosyl-L-methionine = N(6)-methyl-L-lysyl-[protein] + S-adenosyl-L-homocysteine + H(+). It carries out the reaction N(6)-methyl-L-lysyl-[protein] + S-adenosyl-L-methionine = N(6),N(6)-dimethyl-L-lysyl-[protein] + S-adenosyl-L-homocysteine + H(+). Functionally, S-adenosyl-L-methionine-dependent protein-lysine N-methyltransferase that mono- and dimethylates elongation factor 1-alpha (TEF1 and TEF2) at 'Lys-316'. May play a role in intracellular transport. In Saccharomyces cerevisiae (strain ATCC 204508 / S288c) (Baker's yeast), this protein is Protein-lysine N-methyltransferase EFM4.